Here is a 463-residue protein sequence, read N- to C-terminus: Annexin A7 (463 aa).

The span at 1–18 (MSYPGYPPTGYPPFPGYP) shows a compositional bias: pro residues. Disordered regions lie at residues 1–34 (MSYPGYPPTGYPPFPGYPPAGQESSFPTAGQYPY) and 77–149 (SPGG…MTQG). Residues 1 to 143 (MSYPGYPPTG…GGQAPYPSQP (143 aa)) are repeat-rich region. The 3 X 5 AA tandem repeats of G-Y-P-P-X stretch occupies residues 5 to 20 (GYPPTGYPPFPGYPPA). Residues 86–99 (GGQGFGAPPGGAGF) are compositionally biased toward gly residues. Annexin repeat units follow at residues 160 to 231 (FDAM…ALFM), 232 to 303 (PSTY…SMCQ), 315 to 387 (QMAQ…TILQ), and 391 to 462 (NRPA…AIVG). N6-acetyllysine is present on Lys-208.

This sequence belongs to the annexin family. As to quaternary structure, interacts with PDCD6.

Its function is as follows. Calcium/phospholipid-binding protein which promotes membrane fusion and is involved in exocytosis. In Mus musculus (Mouse), this protein is Annexin A7 (Anxa7).